We begin with the raw amino-acid sequence, 385 residues long: uncharacterized protein (385 aa).

A run of 9 helical transmembrane segments spans residues 12–32 (GVAI…PKAA), 50–70 (WAFL…LLFG), 90–110 (LLVL…ILLA), 132–152 (FNTG…LGLI), 195–215 (LALG…GAAL), 233–253 (TGFV…ALQW), 272–292 (LSAP…WPQL), 312–332 (YLLQ…FMHF), and 335–355 (LELL…SVIW).

It to B.subtilis YxaH and YrkO.

The protein resides in the cell membrane. In terms of biological role, involved in transport. This is an uncharacterized protein from Escherichia coli (strain K12).